The following is a 136-amino-acid chain: Small ribosomal subunit protein uS9 (136 aa).

A disordered region spans residues 97 to 136 (SPDNRKPLKTEGHLSRDPRAKERRKYGLKKARKAPQFSKR). Residues 98 to 116 (PDNRKPLKTEGHLSRDPRA) are compositionally biased toward basic and acidic residues. Basic residues predominate over residues 117 to 136 (KERRKYGLKKARKAPQFSKR).

It belongs to the universal ribosomal protein uS9 family.

This Prochlorococcus marinus (strain AS9601) protein is Small ribosomal subunit protein uS9.